The primary structure comprises 83 residues: Large ribosomal subunit protein eL31 (83 aa).

The protein belongs to the eukaryotic ribosomal protein eL31 family.

The sequence is that of Large ribosomal subunit protein eL31 from Methanococcus vannielii (strain ATCC 35089 / DSM 1224 / JCM 13029 / OCM 148 / SB).